The primary structure comprises 439 residues: Deacetylvindoline O-acetyltransferase (439 aa).

The Proton acceptor role is filled by His158. Residues 317-344 adopt a coiled-coil conformation; sequence TKLVINELRKEKQKIKNLSREKLTYVAQ. The active-site Proton acceptor is the Asp380.

It belongs to the plant acyltransferase family. As to quaternary structure, monomer. Predominantly expressed in young leaves of mature plants. Low expression in stems and flowers and not detected in roots. Confined to the laticifer and idioblast cells of leaves, stems, and flower buds.

It localises to the cytoplasm. The protein resides in the nucleus. The enzyme catalyses 4-O-deacetylvindoline + acetyl-CoA = vindoline + CoA. The protein operates within alkaloid biosynthesis; vindoline biosynthesis. Its function is as follows. Involved in the biosynthesis of vindoline, a precursor of vinblastine and vincristine. The chain is Deacetylvindoline O-acetyltransferase from Catharanthus roseus (Madagascar periwinkle).